The primary structure comprises 365 residues: tRNA N6-adenosine threonylcarbamoyltransferase (365 aa).

Fe cation contacts are provided by His111 and His115. Substrate-binding positions include 140–144, Asp173, Gly186, and Asn298; that span reads IVSGG. Asp323 contributes to the Fe cation binding site.

Belongs to the KAE1 / TsaD family. It depends on Fe(2+) as a cofactor.

It localises to the cytoplasm. The enzyme catalyses L-threonylcarbamoyladenylate + adenosine(37) in tRNA = N(6)-L-threonylcarbamoyladenosine(37) in tRNA + AMP + H(+). Required for the formation of a threonylcarbamoyl group on adenosine at position 37 (t(6)A37) in tRNAs that read codons beginning with adenine. Is involved in the transfer of the threonylcarbamoyl moiety of threonylcarbamoyl-AMP (TC-AMP) to the N6 group of A37, together with TsaE and TsaB. TsaD likely plays a direct catalytic role in this reaction. The chain is tRNA N6-adenosine threonylcarbamoyltransferase from Thermomicrobium roseum (strain ATCC 27502 / DSM 5159 / P-2).